Here is a 188-residue protein sequence, read N- to C-terminus: Large ribosomal subunit protein eL18 (188 aa).

Lys119 is covalently cross-linked (Glycyl lysine isopeptide (Lys-Gly) (interchain with G-Cter in SUMO2)). Ser130 carries the phosphoserine modification. Residues 151 to 188 form a disordered region; sequence HFGKAPGTPHSHTKPYVRSKGRKFERARGRRASRGYKN. Thr158 is subject to Phosphothreonine. Basic residues-rich tracts occupy residues 161-171 and 178-188; these read SHTKPYVRSKG and RGRRASRGYKN. Lys164 is covalently cross-linked (Glycyl lysine isopeptide (Lys-Gly) (interchain with G-Cter in SUMO2)).

This sequence belongs to the eukaryotic ribosomal protein eL18 family. As to quaternary structure, component of the large ribosomal subunit.

It localises to the cytoplasm. It is found in the cytosol. The protein resides in the rough endoplasmic reticulum. Functionally, component of the large ribosomal subunit. The ribosome is a large ribonucleoprotein complex responsible for the synthesis of proteins in the cell. This is Large ribosomal subunit protein eL18 (RPL18) from Canis lupus familiaris (Dog).